The primary structure comprises 459 residues: Transmembrane protein 143 (459 aa).

Transmembrane regions (helical) follow at residues 280–300 and 301–321; these read LLNLMLVVSGVAIFVNVGMVV and LTDLKVATSLLLLLFAIFMGL. Serine 332 is subject to Phosphoserine. The tract at residues 435-459 is disordered; sequence GFPKLDPVAPITSEPPQATPSSNIS. Positions 448–459 are enriched in polar residues; sequence EPPQATPSSNIS.

It is found in the membrane. This is Transmembrane protein 143 (TMEM143) from Homo sapiens (Human).